A 299-amino-acid chain; its full sequence is Nicotinate-nucleotide pyrophosphorylase [carboxylating] (299 aa).

Positions 8-12 (LLLPP) are important for hexamer formation. Quinolinate contacts are provided by residues Arg102, 138 to 139 (RK), 160 to 161 (HR), Lys171, Glu201, Asp222, 248 to 250 (SGG), and Gly270.

This sequence belongs to the NadC/ModD family. Hexamer formed by 3 homodimers.

The enzyme catalyses nicotinate beta-D-ribonucleotide + CO2 + diphosphate = quinolinate + 5-phospho-alpha-D-ribose 1-diphosphate + 2 H(+). It functions in the pathway cofactor biosynthesis; NAD(+) biosynthesis; nicotinate D-ribonucleotide from quinolinate: step 1/1. Its function is as follows. Involved in the catabolism of quinolinic acid (QA). The polypeptide is Nicotinate-nucleotide pyrophosphorylase [carboxylating] (Sus scrofa (Pig)).